The following is a 20-amino-acid chain: Unknown protein NF003 from 2D-PAGE (20 aa).

This Naegleria fowleri (Brain eating amoeba) protein is Unknown protein NF003 from 2D-PAGE.